A 136-amino-acid polypeptide reads, in one-letter code: Piercer of microtubule wall 1 protein (136 aa).

A disordered region spans residues 1–24 (MAEECPRACAEPVAPKATAPPERT).

Belongs to the PIERCE1 family. As to quaternary structure, microtubule inner protein component of sperm flagellar doublet microtubules. Interacts with CFAP53, ODAD1 and ODAD3; the interactions link the outer dynein arms docking complex (ODA-DC) to the internal microtubule inner proteins (MIP) in cilium axoneme. As to expression, expressed in airway epithelial cells.

The protein resides in the cytoplasm. It localises to the cytoskeleton. It is found in the cilium axoneme. Its subcellular location is the flagellum axoneme. In terms of biological role, microtubule inner protein involved in the attachment of outer dynein arms (ODAs) to dynein-decorated doublet microtubules (DMTs) in cilia axoneme, which is required for motile cilia beating. Functions at the initial step of left-right asymmetry specification of the visceral organs. The sequence is that of Piercer of microtubule wall 1 protein from Homo sapiens (Human).